A 551-amino-acid chain; its full sequence is MSGGEQKPERYYVGVDVGTGSVRAALVDQSGVLLAFADQPIKNWEPQFNHHEQSSEDIWAACCVVTKKVVQGIDLNQIRGLGFDATCSLVVLDKQFHPLPVNQEGDSHRNVIMWLDHRAVSQVNRINETKHSVLQYVGGVMSVEMQAPKLLWLKENLREICWDKAGHFFDLPDFLSWKATGVTARSLCSLVCKWTYSAEKGWDDSFWKMIGLEDFVADNYSKIGNQVLPPGASLGNGLTPEAARDLGLLPGIAVAASLIDAHAGGLGVIGADVRGHGLICEGQPVTSRLAVICGTSSCHMGISKDPIFVPGVWGPYFSAMVPGFWLNEGGQSVTGKLIDHMVQGHAAFPELQVKATARCQSIYAYLNSHLDLIKKAQPVGFLTVDLHVWPDFHGNRSPLADLTLKGMVTGLKLSQDLDDLAILYLATVQAIALGTRFIIEAMEAAGHSISTLFLCGGLSKNPLFVQMHADITGMPVVLSQEVESVLVGAAVLGACASGDFASVQEAMAKMSKVGKVVFPRLQDKKYYDKKYQVFLKLVEHQKEYLAIMNDD.

It belongs to the FGGY kinase family. As to expression, expressed in kidney, lung and small intestine and to a lower extent in liver and detected in cerebrospinal fluid (at protein level).

The enzyme catalyses D-ribulose + ATP = D-ribulose 5-phosphate + ADP + H(+). It participates in carbohydrate metabolism; pentose and glucuronate interconversion. Functionally, catalyzes ATP-dependent phosphorylation of D-ribulose at C-5 to form D-ribulose 5-phosphate. Postulated to function in a metabolite repair mechanism by preventing toxic accumulation of free D-ribulose formed by non-specific phosphatase activities. Alternatively, may play a role in regulating D-ribulose 5-phosphate recycling in the pentose phosphate pathway. Can phosphorylate ribitol with low efficiency. This is FGGY carbohydrate kinase domain-containing protein from Homo sapiens (Human).